We begin with the raw amino-acid sequence, 151 residues long: FIS1-related protein fis-2 (151 aa).

A helical membrane pass occupies residues 126-146 (LIGAAIVGGGALALAGLVAIF).

Belongs to the FIS1 family.

The protein localises to the mitochondrion outer membrane. The protein resides in the peroxisome membrane. Its subcellular location is the mitochondrion. Its function is as follows. Involved in the fragmentation of the mitochondrial network. Involved in perinuclear clustering of the mitochondrial network. May act, redundantly with fis-1, downstream of mitochondrial fission, before the fission products participate in mitochondrial homeostasis, mitophagy, or apoptosis. Plays a role in apoptosis by promoting mitochondrial elimination and cell-death execution, acting downstream of caspase ced-3, and perhaps independently of dynamin GTPase drp-1, caspase ced-9 and apoptosis-inducing factor AIFM/wah-1. The protein is FIS1-related protein fis-2 of Caenorhabditis elegans.